We begin with the raw amino-acid sequence, 186 residues long: ATP synthase subunit delta, chloroplastic (186 aa).

Belongs to the ATPase delta chain family. F-type ATPases have 2 components, F(1) - the catalytic core - and F(0) - the membrane proton channel. F(1) has five subunits: alpha(3), beta(3), gamma(1), delta(1), epsilon(1). CF(0) has four main subunits: a(1), b(1), b'(1) and c(10-14). The alpha and beta chains form an alternating ring which encloses part of the gamma chain. F(1) is attached to F(0) by a central stalk formed by the gamma and epsilon chains, while a peripheral stalk is formed by the delta, b and b' chains.

The protein resides in the plastid. Its subcellular location is the chloroplast thylakoid membrane. In terms of biological role, f(1)F(0) ATP synthase produces ATP from ADP in the presence of a proton or sodium gradient. F-type ATPases consist of two structural domains, F(1) containing the extramembraneous catalytic core and F(0) containing the membrane proton channel, linked together by a central stalk and a peripheral stalk. During catalysis, ATP synthesis in the catalytic domain of F(1) is coupled via a rotary mechanism of the central stalk subunits to proton translocation. Functionally, this protein is part of the stalk that links CF(0) to CF(1). It either transmits conformational changes from CF(0) to CF(1) or is implicated in proton conduction. The sequence is that of ATP synthase subunit delta, chloroplastic from Pyropia yezoensis (Susabi-nori).